We begin with the raw amino-acid sequence, 293 residues long: sn-glycerol-3-phosphate transport system permease protein UgpA (293 aa).

A run of 6 helical transmembrane segments spans residues 10 to 30 (ILPY…FFWP), 72 to 92 (VTVI…LLLA), 108 to 128 (LLIW…LFMF), 156 to 176 (MILI…LFFV), 204 to 224 (IIFP…TVYA), and 261 to 281 (LGSS…LTAF). The ABC transmembrane type-1 domain occupies 66 to 282 (YLNSLKVTVI…AIVIGLTAFQ (217 aa)).

Belongs to the binding-protein-dependent transport system permease family. In terms of assembly, the complex is composed of two ATP-binding proteins (UgpC), two transmembrane proteins (UgpA and UgpE) and a solute-binding protein (UgpB).

It localises to the cell inner membrane. Part of the ABC transporter complex UgpBAEC involved in sn-glycerol-3-phosphate (G3P) import. Probably responsible for the translocation of the substrate across the membrane. The polypeptide is sn-glycerol-3-phosphate transport system permease protein UgpA (ugpA) (Rhizobium meliloti (strain 1021) (Ensifer meliloti)).